The sequence spans 231 residues: Putative cobalt transport protein CbiM 1 (231 aa).

6 helical membrane passes run 9-29 (PGPW…YGIF), 41-61 (VLPL…LKLP), 74-94 (GMAV…IVLL), 107-127 (TFGA…YAIY), 135-155 (VNFY…TYVV), and 181-201 (VFAI…TLLF).

It belongs to the CbiM family. As to quaternary structure, forms an energy-coupling factor (ECF) transporter complex composed of an ATP-binding protein (A component, CbiO), a transmembrane protein (T component, CbiQ) and 2 possible substrate-capture proteins (S components, CbiM and CbiN) of unknown stoichimetry.

The protein localises to the cell membrane. The protein operates within cofactor biosynthesis; adenosylcobalamin biosynthesis. In terms of biological role, part of the energy-coupling factor (ECF) transporter complex CbiMNOQ involved in cobalt import. The chain is Putative cobalt transport protein CbiM 1 from Methanosarcina barkeri (strain Fusaro / DSM 804).